A 186-amino-acid polypeptide reads, in one-letter code: uncharacterized protein (186 aa).

The N-terminal stretch at 1 to 18 (MKKFFFAAALVVSGLLVG) is a signal peptide. Cys-19 carries N-palmitoyl cysteine lipidation. Cys-19 carries S-diacylglycerol cysteine lipidation.

It is found in the cell membrane. This is an uncharacterized protein from Salmonella typhimurium (strain LT2 / SGSC1412 / ATCC 700720).